The chain runs to 163 residues: Bursicon (163 aa).

The first 23 residues, 1 to 23 (MKSSVCVLLKVLACILLPGGLNA), serve as a signal peptide directing secretion. Intrachain disulfides connect C39–C88, C53–C102, C63–C123, C67–C125, and C85–C128. Residues 39–129 (CQVTPVIHVL…PLECMCRPCT (91 aa)) form the CTCK domain.

Heterodimer of burs and pburs.

It localises to the secreted. Final heterodimeric neurohormone released at the end of the molting cycle, involved in the sclerotization (tanning) of the insect cuticle, melanization and wing spreading. This Aedes aegypti (Yellowfever mosquito) protein is Bursicon.